Consider the following 380-residue polypeptide: Queuine tRNA-ribosyltransferase (380 aa).

The active-site Proton acceptor is D89. Residues 89–93 (DSGGF), D143, Q187, and G214 each bind substrate. Positions 245–251 (GVGKPED) are RNA binding. Catalysis depends on D264, which acts as the Nucleophile. An RNA binding; important for wobble base 34 recognition region spans residues 269 to 273 (TRNAR). Residues C302, C304, C307, and H333 each coordinate Zn(2+).

This sequence belongs to the queuine tRNA-ribosyltransferase family. As to quaternary structure, homodimer. Within each dimer, one monomer is responsible for RNA recognition and catalysis, while the other monomer binds to the replacement base PreQ1. Requires Zn(2+) as cofactor.

The catalysed reaction is 7-aminomethyl-7-carbaguanine + guanosine(34) in tRNA = 7-aminomethyl-7-carbaguanosine(34) in tRNA + guanine. The protein operates within tRNA modification; tRNA-queuosine biosynthesis. Functionally, catalyzes the base-exchange of a guanine (G) residue with the queuine precursor 7-aminomethyl-7-deazaguanine (PreQ1) at position 34 (anticodon wobble position) in tRNAs with GU(N) anticodons (tRNA-Asp, -Asn, -His and -Tyr). Catalysis occurs through a double-displacement mechanism. The nucleophile active site attacks the C1' of nucleotide 34 to detach the guanine base from the RNA, forming a covalent enzyme-RNA intermediate. The proton acceptor active site deprotonates the incoming PreQ1, allowing a nucleophilic attack on the C1' of the ribose to form the product. After dissociation, two additional enzymatic reactions on the tRNA convert PreQ1 to queuine (Q), resulting in the hypermodified nucleoside queuosine (7-(((4,5-cis-dihydroxy-2-cyclopenten-1-yl)amino)methyl)-7-deazaguanosine). This is Queuine tRNA-ribosyltransferase from Proteus mirabilis (strain HI4320).